Here is a 394-residue protein sequence, read N- to C-terminus: uncharacterized protein (394 aa).

The next 8 membrane-spanning stretches (helical) occupy residues V22–H42, L60–F80, G81–A101, L231–L251, G271–P291, L303–P323, L328–L348, and A355–M375.

It is found in the cell membrane. This is an uncharacterized protein from Pseudomonas aeruginosa (strain ATCC 15692 / DSM 22644 / CIP 104116 / JCM 14847 / LMG 12228 / 1C / PRS 101 / PAO1).